Here is a 233-residue protein sequence, read N- to C-terminus: Large ribosomal subunit protein uL1 (233 aa).

This sequence belongs to the universal ribosomal protein uL1 family. As to quaternary structure, part of the 50S ribosomal subunit.

Functionally, binds directly to 23S rRNA. The L1 stalk is quite mobile in the ribosome, and is involved in E site tRNA release. Protein L1 is also a translational repressor protein, it controls the translation of the L11 operon by binding to its mRNA. The protein is Large ribosomal subunit protein uL1 of Shewanella sp. (strain ANA-3).